The following is a 447-amino-acid chain: Zinc finger protein ZIC 1 (447 aa).

The C2H2-type 1; atypical zinc-finger motif lies at 225 to 260 (LICKWIEPEQLANPKKSCNKTFSTMHELVTHVTVEH). The segment at 269–296 (HICFWEECPREGKPFKAKYKLVNHIRVH) adopts a C2H2-type 2; atypical zinc-finger fold. 3 C2H2-type zinc fingers span residues 302 to 326 (FPCP…KRTH), 332 to 356 (FKCE…MHVH), and 362 to 384 (YLCK…MKVH). Residues 375-431 (SSLRKHMKVHESSSQGSQPSPAASSGYESSTPPTIVSPSTDNPTTSSLSPSSSAVHH) are disordered. The segment covering 386–427 (SSSQGSQPSPAASSGYESSTPPTIVSPSTDNPTTSSLSPSSS) has biased composition (low complexity).

It belongs to the GLI C2H2-type zinc-finger protein family. As to quaternary structure, interacts (via the C2H2-type domains 3, 4 and 5) with MDFIC (via the C2H2-type domains 3, 4 and 5). Interacts with GLI1; the interaction enhances transcription activation. Interacts with GLI2. Interacts with GLI3; the interaction enhances transcription activation. CNS. A high level expression is seen in the cerebellum. Detected in the nuclei of the cerebellar granule cell lineage from the progenitor cells of the external germinal layer to the postmigrated cells of the internal granular layer. Detected in medulloblastoma (26/29 cases), but not present in all other tumors examined.

Its subcellular location is the nucleus. It is found in the cytoplasm. In terms of biological role, acts as a transcriptional activator. Involved in neurogenesis. Plays important roles in the early stage of organogenesis of the CNS, as well as during dorsal spinal cord development and maturation of the cerebellum. Involved in the spatial distribution of mossy fiber (MF) neurons within the pontine gray nucleus (PGN). Plays a role in the regulation of MF axon pathway choice. Promotes MF migration towards ipsilaterally-located cerebellar territories. May have a role in shear flow mechanotransduction in osteocytes. Retains nuclear GLI1 and GLI3 in the cytoplasm. Binds to the minimal GLI-consensus sequence 5'-TGGGTGGTC-3'. The chain is Zinc finger protein ZIC 1 (ZIC1) from Homo sapiens (Human).